A 459-amino-acid polypeptide reads, in one-letter code: Nucleobindin-1 (459 aa).

A signal peptide spans 1–25 (MPTSVPRGAPFLLLPPLLMLSAVLA). Residue Ser-85 is modified to Phosphoserine. Thr-147 is subject to Phosphothreonine. Residues 149–217 (EARDLELLIQ…QQRRHREHPK (69 aa)) are a coiled coil. A DNA-binding region spans residues 171–217 (HHEEFKRYEMLKEHERRRYLESLGEEQRKEAERKLQEQQRRHREHPK). The segment covering 192 to 209 (SLGEEQRKEAERKLQEQQ) has biased composition (basic and acidic residues). Residues 192–220 (SLGEEQRKEAERKLQEQQRRHREHPKVNV) are disordered. The binds to GNAI2 and GNAI3 stretch occupies residues 227–320 (LKEVWEELDG…VTLEEFLAST (94 aa)). EF-hand domains lie at 239–274 (PNRFNPKTFFILHDINSDGVLDEQELEALFTKELEK) and 291–326 (ERLRMREHVMKNVDTNQDRLVTLEEFLASTQRKEFG). Residues Asp-252, Asn-254, Asp-256, Glu-263, Asp-304, Asn-306, Asp-308, and Glu-315 each contribute to the Ca(2+) site. A GBA motif is present at residues 302 to 332 (NVDTNQDRLVTLEEFLASTQRKEFGETAEGW). A coiled-coil region spans residues 340-407 (AYTEEELKRF…RKQQQQEQSA (68 aa)). Phosphoserine is present on Ser-368. A disordered region spans residues 393-459 (LQMEQRKQQQ…VLPQLDSQHL (67 aa)). Residues 433–445 (DQKDVPASEKKVP) show a composition bias toward basic and acidic residues. At Ser-456 the chain carries Phosphoserine.

Belongs to the nucleobindin family. Interacts (via GBA motif) with guanine nucleotide-binding protein G(i) alpha subunits GNAI1, GNAI2 and GNAI3 with higher affinity for GNAI1 and GNAI3 than for GNAI2. Preferentially interacts with inactive rather than active GNAI3. Interaction with GNAI3 is inhibited when NUCB1 binds calcium, probably due to a conformational change which renders the GBA motif inaccessible. In terms of tissue distribution, minor constituent of the mineralized matrix of bone. Detected in calvaria, rib cartilage, liver, kidney, spleen, brain, lung, skeletal and heart muscle with highest expression in calvaria and approximately half the amount in kidney, liver and brain.

The protein localises to the golgi apparatus. The protein resides in the cis-Golgi network membrane. It localises to the cytoplasm. It is found in the secreted. Major calcium-binding protein of the Golgi which may have a role in calcium homeostasis. Acts as a non-receptor guanine nucleotide exchange factor which binds to and activates alpha subunits of guanine nucleotide-binding proteins (G proteins). The polypeptide is Nucleobindin-1 (Nucb1) (Rattus norvegicus (Rat)).